A 178-amino-acid chain; its full sequence is ATP-dependent protease subunit HslV (178 aa).

Thr-7 is an active-site residue. 3 residues coordinate Na(+): Gly-162, Cys-165, and Thr-168.

It belongs to the peptidase T1B family. HslV subfamily. As to quaternary structure, a double ring-shaped homohexamer of HslV is capped on each side by a ring-shaped HslU homohexamer. The assembly of the HslU/HslV complex is dependent on binding of ATP.

The protein resides in the cytoplasm. It catalyses the reaction ATP-dependent cleavage of peptide bonds with broad specificity.. Its activity is regulated as follows. Allosterically activated by HslU binding. In terms of biological role, protease subunit of a proteasome-like degradation complex believed to be a general protein degrading machinery. In Leptothrix cholodnii (strain ATCC 51168 / LMG 8142 / SP-6) (Leptothrix discophora (strain SP-6)), this protein is ATP-dependent protease subunit HslV.